We begin with the raw amino-acid sequence, 334 residues long: Putative heme-binding peroxidase (334 aa).

Residue His-40 is the Proton acceptor of the active site. Heme b is bound at residue His-169. Trp-185 acts as the Tryptophan radical intermediate in catalysis.

This sequence belongs to the peroxidase family. Cytochrome c peroxidase subfamily. Heme b serves as cofactor.

In terms of biological role, destroys radicals which are normally produced within the cells and which are toxic to biological systems. This chain is Putative heme-binding peroxidase, found in Cryptococcus neoformans var. neoformans serotype D (strain JEC21 / ATCC MYA-565) (Filobasidiella neoformans).